We begin with the raw amino-acid sequence, 329 residues long: Protein STRICTOSIDINE SYNTHASE-LIKE 11 (329 aa).

An N-terminal signal peptide occupies residues 1–23; that stretch reads MMRSFVSLISLLLLLSFSSSVLS. 2 N-linked (GlcNAc...) asparagine glycosylation sites follow: N37 and N79.

It belongs to the strictosidine synthase family.

It is found in the vacuole. The enzyme catalyses 3alpha(S)-strictosidine + H2O = secologanin + tryptamine. It functions in the pathway alkaloid biosynthesis; 3alpha(S)-strictosidine biosynthesis; 3alpha(S)-strictosidine from secologanin and tryptamine: step 1/1. Functionally, catalyzes the stereospecific condensation of tryptamine with secologanin to form strictosidine, the key intermediate of indole alkaloid biosynthesis. This is Protein STRICTOSIDINE SYNTHASE-LIKE 11 from Arabidopsis thaliana (Mouse-ear cress).